The chain runs to 98 residues: Large ribosomal subunit protein mL53 (98 aa).

This sequence belongs to the mitochondrion-specific ribosomal protein mL53 family. Component of the mitochondrial large ribosomal subunit (mt-LSU). Mature N.crassa 74S mitochondrial ribosomes consist of a small (37S) and a large (54S) subunit. The 37S small subunit contains a 16S ribosomal RNA (16S mt-rRNA) and 32 different proteins. The 54S large subunit contains a 23S rRNA (23S mt-rRNA) and 42 different proteins.

The protein localises to the mitochondrion. In terms of biological role, component of the mitochondrial ribosome (mitoribosome), a dedicated translation machinery responsible for the synthesis of mitochondrial genome-encoded proteins, including at least some of the essential transmembrane subunits of the mitochondrial respiratory chain. The mitoribosomes are attached to the mitochondrial inner membrane and translation products are cotranslationally integrated into the membrane. In Neurospora crassa (strain ATCC 24698 / 74-OR23-1A / CBS 708.71 / DSM 1257 / FGSC 987), this protein is Large ribosomal subunit protein mL53 (mrpl44).